The chain runs to 119 residues: MFARISTIITTLFFAMLAAATAVPRTDPPPATGSQCTAVGGDVNCCNSVQDASNPIVGLLAGLLGIVLGPIQGLVGLTCNPISVIGGGNSCSSQTVCCTGNNFSGGLLVIGCSPINIDL.

The N-terminal stretch at 1–22 (MFARISTIITTLFFAMLAAATA) is a signal peptide. 4 disulfide bridges follow: Cys36–Cys97, Cys45–Cys91, Cys46–Cys79, and Cys98–Cys112.

The protein belongs to the fungal hydrophobin family. As to quaternary structure, self-assembles to form functional amyloid fibrils called rodlets. Self-assembly into fibrillar rodlets occurs spontaneously at hydrophobic:hydrophilic interfaces and the rodlets further associate laterally to form amphipathic monolayers.

It localises to the secreted. The protein localises to the cell wall. Functionally, aerial growth, conidiation, and dispersal of filamentous fungi in the environment rely upon a capability of their secreting small amphipathic proteins called hydrophobins (HPBs) with low sequence identity. Class I can self-assemble into an outermost layer of rodlet bundles on aerial cell surfaces, conferring cellular hydrophobicity that supports fungal growth, development and dispersal; whereas Class II form highly ordered films at water-air interfaces through intermolecular interactions but contribute nothing to the rodlet structure. Abh2 is a class I hydrophobin involved in the emergence of aerial hyphae and strands. In Agaricus bisporus (White button mushroom), this protein is Class I hydrophobin 2.